The chain runs to 129 residues: Glycine cleavage system H protein (129 aa).

Residues 24–106 (TFTVGISEHA…YGDGWLFRIK (83 aa)) form the Lipoyl-binding domain. At K65 the chain carries N6-lipoyllysine.

The protein belongs to the GcvH family. In terms of assembly, the glycine cleavage system is composed of four proteins: P, T, L and H. It depends on (R)-lipoate as a cofactor.

Functionally, the glycine cleavage system catalyzes the degradation of glycine. The H protein shuttles the methylamine group of glycine from the P protein to the T protein. This is Glycine cleavage system H protein from Idiomarina loihiensis (strain ATCC BAA-735 / DSM 15497 / L2-TR).